The primary structure comprises 1748 residues: WD repeat-containing protein 90 (1748 aa).

Positions 1-207 (MARAWQHPFL…VTPMPREMAF (207 aa)) are binds with microtubules. Ser241 is subject to Phosphoserine. The tract at residues 274 to 308 (QTPSPTASGRAALAPRPFPEVSLSQERSDASNADG) is disordered. 21 WD repeats span residues 407 to 450 (GHTD…CLFR), 452 to 494 (PMHV…LGGE), 501 to 541 (AHTD…LRSC), 615 to 654 (SSGP…VLLE), 656 to 695 (EHEG…YHML), 698 to 737 (SHTA…QLYD), 740 to 779 (SSED…VLVE), 782 to 821 (CHRG…WHVL), 882 to 922 (SRLD…IIRE), 926 to 964 (VHPE…SPGP), 969 to 1009 (GHSE…QSFP), 1156 to 1201 (GHSA…CQHL), 1204 to 1245 (PHST…LVSS), 1247 to 1286 (RLPE…ADIS), 1298 to 1326 (VGAG…VCVW), 1327 to 1376 (DTRA…ELRC), 1433 to 1472 (GHRS…LVIQ), 1475 to 1520 (VLNQ…MELK), 1523 to 1562 (PHPV…TFRV), 1568 to 1614 (GAPI…NHCE), and 1715 to 1748 (GHDN…VPGL). The tract at residues 1004–1071 (SDQSFPGAPP…GARDTRNSGA (68 aa)) is disordered.

This sequence belongs to the WD repeat WDR90/POC16 family.

The protein localises to the cytoplasm. It localises to the cytoskeleton. Its subcellular location is the microtubule organizing center. It is found in the centrosome. The protein resides in the centriole. The protein localises to the centriolar satellite. Its function is as follows. Microtubule-binding protein that plays a crucial role in ensuring inner core protein localization within the centriole core, as well as in maintaining the microtubule wall integrity and the overall centriole roundness and stability. Required for efficient primary cilium formation. This is WD repeat-containing protein 90 (WDR90) from Homo sapiens (Human).